We begin with the raw amino-acid sequence, 196 residues long: Small ribosomal subunit protein uS4c (196 aa).

The interval 17–36 is disordered; the sequence is ALPGLTRKTPKSGSNLKKKF. In terms of domain architecture, S4 RNA-binding spans 89–150; the sequence is MRLDNILFRL…NQRSKRLIQN (62 aa).

This sequence belongs to the universal ribosomal protein uS4 family. Part of the 30S ribosomal subunit. Contacts protein S5. The interaction surface between S4 and S5 is involved in control of translational fidelity.

Its subcellular location is the plastid. It is found in the chloroplast. Functionally, one of the primary rRNA binding proteins, it binds directly to 16S rRNA where it nucleates assembly of the body of the 30S subunit. In terms of biological role, with S5 and S12 plays an important role in translational accuracy. The protein is Small ribosomal subunit protein uS4c (rps4) of Phyllostachys flexuosa (Drooping timber bamboo).